The following is a 243-amino-acid chain: Probable aquaporin SIP1-2 (243 aa).

2 consecutive transmembrane segments (helical) span residues 12-32 (VITF…AAIV) and 42-62 (WAPL…FTVI). The NPA 1 signature appears at 72 to 74 (NPC). The next 3 membrane-spanning stretches (helical) occupy residues 90–110 (FSLA…AITI), 135–155 (GAIS…LIIL), and 162–182 (LAKT…GSKF). The short motif at 188–190 (NPA) is the NPA 2 element. The chain crosses the membrane as a helical span at residues 210-230 (VYWISSYTGAILSAMLFRIIF).

The protein belongs to the MIP/aquaporin (TC 1.A.8) family. SIP (TC 1.A.8.10) subfamily. As to expression, expressed in roots and above ground. Expressed in elongating regions of the root tips, cotyledons, minor veins and hydathode cells of the rosette leaves. Weakly expressed in vascular tissues of the flower petals, filaments of stamens, upper part of the styles and receptacles of the siliques.

It localises to the endoplasmic reticulum membrane. In terms of biological role, water channel required to facilitate the transport of water across cell membrane. This Arabidopsis thaliana (Mouse-ear cress) protein is Probable aquaporin SIP1-2 (SIP1-2).